A 782-amino-acid chain; its full sequence is Translation initiation factor IF-2 (782 aa).

The segment at 47–196 is disordered; sequence DNAIDGTNKK…TPPKPKELPE (150 aa). Basic and acidic residues predominate over residues 53–65; sequence TNKKAEAPKKETT. A compositionally biased stretch (polar residues) spans 66 to 81; the sequence is SNENGNSKGPNKPNMT. A compositionally biased stretch (low complexity) spans 82–93; it reads NSNEKSNKPNKP. Residues 115–129 show a composition bias toward polar residues; sequence KPANTSNQTQSSGNK. Residues 133-170 show a composition bias toward low complexity; sequence GGQKRNNNNNSNRPGGGNPNRPGGNNRPNRGGNFNNKG. A tr-type G domain is found at 283–452; the sequence is ERPPVVTIMG…LLVSEVEELK (170 aa). Residues 292-299 form a G1 region; sequence GHVDHGKT. 292–299 is a GTP binding site; it reads GHVDHGKT. Residues 317–321 are G2; sequence GITQH. A G3 region spans residues 338–341; the sequence is DTPG. Residues 338-342 and 392-395 each bind GTP; these read DTPGH and NKID. The interval 392–395 is G4; it reads NKID. The tract at residues 428-430 is G5; the sequence is SAK.

Belongs to the TRAFAC class translation factor GTPase superfamily. Classic translation factor GTPase family. IF-2 subfamily.

It localises to the cytoplasm. Functionally, one of the essential components for the initiation of protein synthesis. Protects formylmethionyl-tRNA from spontaneous hydrolysis and promotes its binding to the 30S ribosomal subunits. Also involved in the hydrolysis of GTP during the formation of the 70S ribosomal complex. The sequence is that of Translation initiation factor IF-2 from Listeria innocua serovar 6a (strain ATCC BAA-680 / CLIP 11262).